The chain runs to 123 residues: Fluoride-specific ion channel FluC (123 aa).

The next 4 helical transmembrane spans lie at 1-21, 32-52, 66-86, and 94-114; these read MQWL…GWLA, LGTL…LVWF, FVIT…AEVF, and LLAA…ATAL. 2 residues coordinate Na(+): glycine 73 and threonine 76.

The protein belongs to the fluoride channel Fluc/FEX (TC 1.A.43) family.

It localises to the cell inner membrane. The catalysed reaction is fluoride(in) = fluoride(out). With respect to regulation, na(+) is not transported, but it plays an essential structural role and its presence is essential for fluoride channel function. In terms of biological role, fluoride-specific ion channel. Important for reducing fluoride concentration in the cell, thus reducing its toxicity. This is Fluoride-specific ion channel FluC from Psychrobacter arcticus (strain DSM 17307 / VKM B-2377 / 273-4).